The following is an 84-amino-acid chain: Large ribosomal subunit protein bL27 (84 aa).

The disordered stretch occupies residues M1–G22.

It belongs to the bacterial ribosomal protein bL27 family.

In Shewanella amazonensis (strain ATCC BAA-1098 / SB2B), this protein is Large ribosomal subunit protein bL27.